A 109-amino-acid chain; its full sequence is Probable WRKY transcription factor 43 (109 aa).

The WRKY DNA-binding region spans 24 to 89 (SDADILDDGY…YEGIHNHPCE (66 aa)).

The protein belongs to the WRKY group II-c family.

It localises to the nucleus. Transcription factor. Interacts specifically with the W box (5'-(T)TGAC[CT]-3'), a frequently occurring elicitor-responsive cis-acting element. In Arabidopsis thaliana (Mouse-ear cress), this protein is Probable WRKY transcription factor 43 (WRKY43).